A 234-amino-acid polypeptide reads, in one-letter code: Sugar fermentation stimulation protein A (234 aa).

Positions 201–220 form a DNA-binding region, H-T-H motif; sequence LLSEAQQRGVEILAYKAEIS.

It belongs to the SfsA family.

In terms of biological role, binds to DNA non-specifically. Could be a regulatory factor involved in maltose metabolism. This is Sugar fermentation stimulation protein A from Shigella boydii serotype 4 (strain Sb227).